We begin with the raw amino-acid sequence, 386 residues long: Antilisterial bacteriocin subtilosin biosynthesis protein AlbE (386 aa).

Involved in the production of the bacteriocin subtilosin. This Bacillus subtilis (strain 168) protein is Antilisterial bacteriocin subtilosin biosynthesis protein AlbE (albE).